A 137-amino-acid chain; its full sequence is Small ribosomal subunit protein uS12 (137 aa).

Disordered regions lie at residues 1 to 21 and 34 to 57; these read MPTI…KSDS and VHTK…TPKK.

This sequence belongs to the universal ribosomal protein uS12 family. As to quaternary structure, part of the 30S ribosomal subunit. Contacts proteins S8 and S17. May interact with IF1 in the 30S initiation complex.

In terms of biological role, with S4 and S5 plays an important role in translational accuracy. Its function is as follows. Interacts with and stabilizes bases of the 16S rRNA that are involved in tRNA selection in the A site and with the mRNA backbone. Located at the interface of the 30S and 50S subunits, it traverses the body of the 30S subunit contacting proteins on the other side and probably holding the rRNA structure together. The combined cluster of proteins S8, S12 and S17 appears to hold together the shoulder and platform of the 30S subunit. The polypeptide is Small ribosomal subunit protein uS12 (Streptococcus mutans serotype c (strain ATCC 700610 / UA159)).